Here is a 501-residue protein sequence, read N- to C-terminus: Aerobic glycerol-3-phosphate dehydrogenase (501 aa).

5 to 33 (DLIVIGGGINGAGIAADAAGRGLSVLMLE) provides a ligand contact to FAD.

This sequence belongs to the FAD-dependent glycerol-3-phosphate dehydrogenase family. It depends on FAD as a cofactor.

It is found in the cytoplasm. The catalysed reaction is a quinone + sn-glycerol 3-phosphate = dihydroxyacetone phosphate + a quinol. The protein operates within polyol metabolism; glycerol degradation via glycerol kinase pathway; glycerone phosphate from sn-glycerol 3-phosphate (aerobic route): step 1/1. In terms of biological role, conversion of glycerol 3-phosphate to dihydroxyacetone. Uses molecular oxygen or nitrate as electron acceptor. The chain is Aerobic glycerol-3-phosphate dehydrogenase (glpD) from Escherichia coli (strain K12).